Here is a 357-residue protein sequence, read N- to C-terminus: Heat-inducible transcription repressor HrcA (357 aa).

Belongs to the HrcA family.

Negative regulator of class I heat shock genes (grpE-dnaK-dnaJ and groELS operons). Prevents heat-shock induction of these operons. The polypeptide is Heat-inducible transcription repressor HrcA (Anabaena sp. (strain L31)).